A 544-amino-acid polypeptide reads, in one-letter code: Inward rectifier potassium channel irk-1 (544 aa).

The Cytoplasmic segment spans residues 1-109 (MTLSVPDCAE…IFTTMIDVKW (109 aa)). A helical membrane pass occupies residues 110–134 (RWMLMLFASAFVLSWSIFGTTYYLI). The Extracellular portion of the chain corresponds to 135–158 (ALVHGDLSLPTPVNHTACVMNLDS). The helical; Pore-forming intramembrane region spans 159 to 170 (VYSSFLFAVETH). An intramembrane region (pore-forming) is located at residues 171 to 177 (HTIGYGH). Positions 172-177 (TIGYGH) match the Selectivity filter motif. At 178-186 (RYITTECYL) the chain is on the extracellular side. The chain crosses the membrane as a helical span at residues 187 to 208 (AGAIVCLQAICALLLQSFMVGI). Residues 209-544 (VFAKMARPKK…PIHIEIVSET (336 aa)) lie on the Cytoplasmic side of the membrane. Disordered regions lie at residues 411–448 (HKLE…NSPV) and 512–533 (LSDL…SPPV). Over residues 438-448 (NHFQSSSNSPV) the composition is skewed to polar residues.

This sequence belongs to the inward rectifier-type potassium channel (TC 1.A.2.1) family. In terms of tissue distribution, expressed in neurons in the head and tail with no expression detected in non-neuronal cells in these regions. Also detected in the egg-laying system of adult hermaphordites with strong expression in the HSN motor neurons and weak expression in vulval muscles.

It is found in the membrane. It localises to the perikaryon. Its subcellular location is the cell projection. Functionally, inward rectifier potassium channels are characterized by a greater tendency to allow potassium to flow into the cell rather than out of it. Required for modulation of the activity of the hermaphrodite-specific neurons (HSNs) by the G-protein coupled neuropeptide receptor egl-6 which in turn controls egg-laying behavior. In Caenorhabditis elegans, this protein is Inward rectifier potassium channel irk-1 (irk-1).